The following is a 721-amino-acid chain: 1,4-alpha-glucan branching enzyme GlgB (721 aa).

Asp404 serves as the catalytic Nucleophile. Glu457 serves as the catalytic Proton donor.

This sequence belongs to the glycosyl hydrolase 13 family. GlgB subfamily. Monomer.

It carries out the reaction Transfers a segment of a (1-&gt;4)-alpha-D-glucan chain to a primary hydroxy group in a similar glucan chain.. Its pathway is glycan biosynthesis; glycogen biosynthesis. Functionally, catalyzes the formation of the alpha-1,6-glucosidic linkages in glycogen by scission of a 1,4-alpha-linked oligosaccharide from growing alpha-1,4-glucan chains and the subsequent attachment of the oligosaccharide to the alpha-1,6 position. The protein is 1,4-alpha-glucan branching enzyme GlgB of Novosphingobium aromaticivorans (strain ATCC 700278 / DSM 12444 / CCUG 56034 / CIP 105152 / NBRC 16084 / F199).